The primary structure comprises 544 residues: Chaperonin GroEL (544 aa).

ATP contacts are provided by residues 29 to 32, 86 to 90, glycine 413, 478 to 480, and aspartate 494; these read TIGP, DGTTT, and NAA.

This sequence belongs to the chaperonin (HSP60) family. As to quaternary structure, forms a cylinder of 14 subunits composed of two heptameric rings stacked back-to-back. Interacts with the co-chaperonin GroES.

The protein resides in the cytoplasm. The enzyme catalyses ATP + H2O + a folded polypeptide = ADP + phosphate + an unfolded polypeptide.. Its function is as follows. Together with its co-chaperonin GroES, plays an essential role in assisting protein folding. The GroEL-GroES system forms a nano-cage that allows encapsulation of the non-native substrate proteins and provides a physical environment optimized to promote and accelerate protein folding. The sequence is that of Chaperonin GroEL from Exiguobacterium sp. (strain ATCC BAA-1283 / AT1b).